The sequence spans 116 residues: MNLITTIITITITLSAVLATISFWLPQISPDAEKLSPYECGFDPLGSARLPFSLRFFLIAILFLLFDLEIALLLPLPWGDQLSTPTLTLIWSTAVLALLTLGLIYEWTQGGLEWAE.

3 consecutive transmembrane segments (helical) span residues 3–23 (LITT…TISF), 56–76 (FFLI…LLPL), and 87–107 (LTLI…IYEW).

Belongs to the complex I subunit 3 family.

It localises to the mitochondrion membrane. The catalysed reaction is a ubiquinone + NADH + 5 H(+)(in) = a ubiquinol + NAD(+) + 4 H(+)(out). In terms of biological role, core subunit of the mitochondrial membrane respiratory chain NADH dehydrogenase (Complex I) that is believed to belong to the minimal assembly required for catalysis. Complex I functions in the transfer of electrons from NADH to the respiratory chain. The immediate electron acceptor for the enzyme is believed to be ubiquinone. The chain is NADH-ubiquinone oxidoreductase chain 3 (MT-ND3) from Oncorhynchus keta (Chum salmon).